Consider the following 232-residue polypeptide: Izumo sperm-egg fusion protein 4 (232 aa).

Positions 1-15 (MALLLCLVCLTAALA) are cleaved as a signal peptide. Asn-24 and Asn-219 each carry an N-linked (GlcNAc...) asparagine glycan.

The protein belongs to the Izumo family. In terms of tissue distribution, detected in sperm.

The protein resides in the secreted. The protein is Izumo sperm-egg fusion protein 4 (IZUMO4) of Homo sapiens (Human).